The primary structure comprises 364 residues: Uroporphyrinogen decarboxylase (364 aa).

Arg34, Ala36, Arg38, Arg47, Asp83, Tyr161, Ser216, and His336 together coordinate coproporphyrinogen I. Coproporphyrinogen III-binding residues include Arg34, Ala36, and Arg38. Residues Asp83, Tyr161, Ser216, and His336 each coordinate coproporphyrinogen III.

It belongs to the uroporphyrinogen decarboxylase family. As to quaternary structure, homodimer.

Its subcellular location is the cytoplasm. It localises to the cytosol. It catalyses the reaction uroporphyrinogen III + 4 H(+) = coproporphyrinogen III + 4 CO2. The enzyme catalyses uroporphyrinogen I + 4 H(+) = coproporphyrinogen I + 4 CO2. The protein operates within porphyrin-containing compound metabolism; protoporphyrin-IX biosynthesis; coproporphyrinogen-III from 5-aminolevulinate: step 4/4. Its function is as follows. Catalyzes the sequential decarboxylation of the four acetate side chains of uroporphyrinogen to form coproporphyrinogen and participates in the fifth step in the heme biosynthetic pathway. Isomer I or isomer III of uroporphyrinogen may serve as substrate, but only coproporphyrinogen III can ultimately be converted to heme. In vitro also decarboxylates pentacarboxylate porphyrinogen I. This Rattus norvegicus (Rat) protein is Uroporphyrinogen decarboxylase.